The primary structure comprises 245 residues: 1-(5-phosphoribosyl)-5-[(5-phosphoribosylamino)methylideneamino] imidazole-4-carboxamide isomerase (245 aa).

D7 serves as the catalytic Proton acceptor. D129 (proton donor) is an active-site residue.

The protein belongs to the HisA/HisF family.

It is found in the cytoplasm. It carries out the reaction 1-(5-phospho-beta-D-ribosyl)-5-[(5-phospho-beta-D-ribosylamino)methylideneamino]imidazole-4-carboxamide = 5-[(5-phospho-1-deoxy-D-ribulos-1-ylimino)methylamino]-1-(5-phospho-beta-D-ribosyl)imidazole-4-carboxamide. The protein operates within amino-acid biosynthesis; L-histidine biosynthesis; L-histidine from 5-phospho-alpha-D-ribose 1-diphosphate: step 4/9. This is 1-(5-phosphoribosyl)-5-[(5-phosphoribosylamino)methylideneamino] imidazole-4-carboxamide isomerase from Edwardsiella ictaluri (strain 93-146).